A 305-amino-acid polypeptide reads, in one-letter code: D-alanine--D-alanine ligase (305 aa).

The region spanning Arg-104 to Glu-300 is the ATP-grasp domain. Leu-131–Thr-181 contacts ATP. Mg(2+)-binding residues include Asp-249, Glu-267, and Asn-269.

This sequence belongs to the D-alanine--D-alanine ligase family. The cofactor is Mg(2+). Mn(2+) serves as cofactor.

It localises to the cytoplasm. The catalysed reaction is 2 D-alanine + ATP = D-alanyl-D-alanine + ADP + phosphate + H(+). It functions in the pathway cell wall biogenesis; peptidoglycan biosynthesis. Its function is as follows. Cell wall formation. This Paramagnetospirillum magneticum (strain ATCC 700264 / AMB-1) (Magnetospirillum magneticum) protein is D-alanine--D-alanine ligase.